The following is a 300-amino-acid chain: Acetylglutamate kinase (300 aa).

Substrate-binding positions include 67 to 68 (GG), R89, and N194.

The protein belongs to the acetylglutamate kinase family. ArgB subfamily.

The protein localises to the cytoplasm. The catalysed reaction is N-acetyl-L-glutamate + ATP = N-acetyl-L-glutamyl 5-phosphate + ADP. It participates in amino-acid biosynthesis; L-arginine biosynthesis; N(2)-acetyl-L-ornithine from L-glutamate: step 2/4. Catalyzes the ATP-dependent phosphorylation of N-acetyl-L-glutamate. In Saccharophagus degradans (strain 2-40 / ATCC 43961 / DSM 17024), this protein is Acetylglutamate kinase.